The primary structure comprises 251 residues: 5-oxoprolinase subunit A 3 (251 aa).

The protein belongs to the LamB/PxpA family. Forms a complex composed of PxpA, PxpB and PxpC.

The enzyme catalyses 5-oxo-L-proline + ATP + 2 H2O = L-glutamate + ADP + phosphate + H(+). Its function is as follows. Catalyzes the cleavage of 5-oxoproline to form L-glutamate coupled to the hydrolysis of ATP to ADP and inorganic phosphate. This Pseudomonas aeruginosa (strain ATCC 15692 / DSM 22644 / CIP 104116 / JCM 14847 / LMG 12228 / 1C / PRS 101 / PAO1) protein is 5-oxoprolinase subunit A 3.